The following is a 243-amino-acid chain: Coproheme decarboxylase (243 aa).

Y145 is an active-site residue. H168 provides a ligand contact to Fe-coproporphyrin III.

Belongs to the ChdC family. Type 2 subfamily. Fe-coproporphyrin III is required as a cofactor.

The catalysed reaction is Fe-coproporphyrin III + 2 H2O2 + 2 H(+) = heme b + 2 CO2 + 4 H2O. It catalyses the reaction Fe-coproporphyrin III + H2O2 + H(+) = harderoheme III + CO2 + 2 H2O. It carries out the reaction harderoheme III + H2O2 + H(+) = heme b + CO2 + 2 H2O. Its pathway is porphyrin-containing compound metabolism; protoheme biosynthesis. Its function is as follows. Involved in coproporphyrin-dependent heme b biosynthesis. Catalyzes the decarboxylation of Fe-coproporphyrin III (coproheme) to heme b (protoheme IX), the last step of the pathway. The reaction occurs in a stepwise manner with a three-propionate intermediate. The polypeptide is Coproheme decarboxylase (Streptomyces coelicolor (strain ATCC BAA-471 / A3(2) / M145)).